The chain runs to 176 residues: Peptidoglycan-associated lipoprotein (176 aa).

The first 21 residues, 1–21 (MKAGSFYKLGLLVASAVLVAA), serve as a signal peptide directing secretion. Residue cysteine 22 is the site of N-palmitoyl cysteine attachment. Cysteine 22 carries S-diacylglycerol cysteine lipidation. In terms of domain architecture, OmpA-like spans 60–176 (YTTQAPHNQL…RVEFIYEATR (117 aa)).

This sequence belongs to the Pal lipoprotein family. The Tol-Pal system is composed of five core proteins: the inner membrane proteins TolA, TolQ and TolR, the periplasmic protein TolB and the outer membrane protein Pal. They form a network linking the inner and outer membranes and the peptidoglycan layer.

It is found in the cell outer membrane. Functionally, part of the Tol-Pal system, which plays a role in outer membrane invagination during cell division and is important for maintaining outer membrane integrity. Very strongly associated with the peptidoglycan. The sequence is that of Peptidoglycan-associated lipoprotein from Legionella pneumophila.